The chain runs to 597 residues: Elongation factor 4 (597 aa).

A tr-type G domain is found at 2–184 (KNIRNFSIIA…SIVEHLPAPE (183 aa)). GTP is bound by residues 14–19 (DHGKST) and 131–134 (NKID).

This sequence belongs to the TRAFAC class translation factor GTPase superfamily. Classic translation factor GTPase family. LepA subfamily.

It localises to the cell inner membrane. The enzyme catalyses GTP + H2O = GDP + phosphate + H(+). Required for accurate and efficient protein synthesis under certain stress conditions. May act as a fidelity factor of the translation reaction, by catalyzing a one-codon backward translocation of tRNAs on improperly translocated ribosomes. Back-translocation proceeds from a post-translocation (POST) complex to a pre-translocation (PRE) complex, thus giving elongation factor G a second chance to translocate the tRNAs correctly. Binds to ribosomes in a GTP-dependent manner. The chain is Elongation factor 4 from Desulfotalea psychrophila (strain LSv54 / DSM 12343).